Reading from the N-terminus, the 435-residue chain is Trigger factor (435 aa).

The PPIase FKBP-type domain maps to 163-248 (GDFVTFDFKG…IKEIKVKELP (86 aa)).

The protein belongs to the FKBP-type PPIase family. Tig subfamily.

The protein resides in the cytoplasm. The catalysed reaction is [protein]-peptidylproline (omega=180) = [protein]-peptidylproline (omega=0). In terms of biological role, involved in protein export. Acts as a chaperone by maintaining the newly synthesized protein in an open conformation. Functions as a peptidyl-prolyl cis-trans isomerase. The sequence is that of Trigger factor from Citrifermentans bemidjiense (strain ATCC BAA-1014 / DSM 16622 / JCM 12645 / Bem) (Geobacter bemidjiensis).